The primary structure comprises 791 residues: Cellobionic acid phosphorylase (791 aa).

The active-site Proton donor is the aspartate 478.

It belongs to the glycosyl hydrolase 94 family. Cellobionic acid phosphorylase subfamily. In terms of assembly, homodimer.

The catalysed reaction is 4-O-beta-D-glucopyranosyl-D-gluconate + phosphate = D-gluconate + alpha-D-glucose 1-phosphate. The protein operates within glycan metabolism; cellulose degradation. Functionally, catalyzes the reversible phosphorolysis of cellobionic acid (4-O-beta-D-glucopyranosyl-D-gluconate), a probable step in cellulose degradation. May be part of a metabolic pathway where cellobionic acid is converted into alpha-D-glucose 1-phosphate and D-gluconic acid to enter glycolysis and the pentose phosphate pathway, respectively. Produces 4-O-beta-D-glucopyranosyl-D-glucuronate from alpha-D-glucose 1-phosphate and D-glucuronate with low activity in the synthetic direction. The chain is Cellobionic acid phosphorylase from Neurospora crassa (strain ATCC 24698 / 74-OR23-1A / CBS 708.71 / DSM 1257 / FGSC 987).